Reading from the N-terminus, the 73-residue chain is Putative antimicrobial peptide clone 4 (73 aa).

Residues 1-22 (MQMKYLIPIFFLVLIVADHCHA) form the signal peptide. Positions 45–73 (DITSQIEQYRNLQKREAELEDILANLPVY) are excised as a propeptide.

Belongs to the non-disulfide-bridged peptide (NDBP) superfamily. Short antimicrobial peptide (group 4) family. Expressed by the venom gland.

The protein resides in the secreted. Its function is as follows. Antimicrobial peptide. Has a high antibacterial activity against the Gram-positive bacterium S.aureus (MIC=5-17.30 uM), the methicillin-resistant S.aureus (MRSA) (MIC=17.30 uM), and E.faecalis (MIC=69.23 uM). Has antifungal activity against Candida spp. and one Cryptococcus neoformans strains with MICs values ranging from 6.25 to 100 uM. Also shows an inhibitory activity on C.albicans biofilms at high concentrations. Has a moderate hemolytic potency (18% at 20 uM). Also inhibits the growth of the five cancer cell lines tested. In the model of polymicrobial sepsis, it exhibits an antibiotic effect, reducing the levels of microorganisms in the infectious focus and the inflammatory responses in the lung and cecum of septic animals. This chain is Putative antimicrobial peptide clone 4, found in Tityus costatus (Brazilian scorpion).